The primary structure comprises 322 residues: MSLRDALKTPSSEITDEAVYRDRRRLLQLFALTPALSVAGCAEADPPPPPKTVVTPAQARSGFRTAEELTRLEDVTSYNNFYEFGTDKTDPSKAAKTLKLSPWSVKVSGECEKPGSLSLDELLKGISAEERIYRLRCVEGWSMVIPWTGVPLGEVLKRFAPTSRAKYVAFTTLADPQQMPGVRYRSINWPYREGLRIDEAMHPLTLLATGLYGKPLPQQNGAPLRLVVPWKYGFKSIKSIVEIRFVEKMPETAWHDLQPSEYGFFSNVNPAVDHPRWSQKTERRIAGTASKLFAERIATKPFNGYADQVASLYAGMDLKKWF.

A signal peptide (tat-type signal) is located at residues 1 to 59 (MSLRDALKTPSSEITDEAVYRDRRRLLQLFALTPALSVAGCAEADPPPPPKTVVTPAQA). Mo-molybdopterin is bound by residues N79, 82-83 (YE), C137, T172, N220, R225, and 236-238 (SIK).

The protein belongs to the MsrP family. As to quaternary structure, heterodimer of a catalytic subunit (MsrP) and a heme-binding subunit (MsrQ). Requires Mo-molybdopterin as cofactor. Post-translationally, predicted to be exported by the Tat system. The position of the signal peptide cleavage has not been experimentally proven.

It localises to the periplasm. The enzyme catalyses L-methionyl-[protein] + a quinone + H2O = L-methionyl-(S)-S-oxide-[protein] + a quinol. It catalyses the reaction L-methionyl-[protein] + a quinone + H2O = L-methionyl-(R)-S-oxide-[protein] + a quinol. In terms of biological role, part of the MsrPQ system that repairs oxidized periplasmic proteins containing methionine sulfoxide residues (Met-O), using respiratory chain electrons. Thus protects these proteins from oxidative-stress damage caused by reactive species of oxygen and chlorine generated by the host defense mechanisms. MsrPQ is essential for the maintenance of envelope integrity under bleach stress, rescuing a wide series of structurally unrelated periplasmic proteins from methionine oxidation. The catalytic subunit MsrP is non-stereospecific, being able to reduce both (R-) and (S-) diastereoisomers of methionine sulfoxide. The chain is Protein-methionine-sulfoxide reductase catalytic subunit MsrP from Xanthomonas campestris pv. campestris (strain ATCC 33913 / DSM 3586 / NCPPB 528 / LMG 568 / P 25).